Consider the following 153-residue polypeptide: Endoribonuclease YbeY (153 aa).

3 residues coordinate Zn(2+): H114, H118, and H124.

It belongs to the endoribonuclease YbeY family. The cofactor is Zn(2+).

It is found in the cytoplasm. Single strand-specific metallo-endoribonuclease involved in late-stage 70S ribosome quality control and in maturation of the 3' terminus of the 16S rRNA. This is Endoribonuclease YbeY from Shewanella baltica (strain OS195).